The chain runs to 206 residues: Flavin prenyltransferase UbiX (206 aa).

FMN-binding positions include 11 to 13 (GAS), Ser-37, 103 to 106 (SMST), and Arg-138. Dimethylallyl phosphate contacts are provided by Tyr-168 and Arg-184.

It belongs to the UbiX/PAD1 family.

It carries out the reaction dimethylallyl phosphate + FMNH2 = prenylated FMNH2 + phosphate. Flavin prenyltransferase that catalyzes the synthesis of the prenylated FMN cofactor (prenyl-FMN) for 4-hydroxy-3-polyprenylbenzoic acid decarboxylase UbiD. The prenyltransferase is metal-independent and links a dimethylallyl moiety from dimethylallyl monophosphate (DMAP) to the flavin N5 and C6 atoms of FMN. The chain is Flavin prenyltransferase UbiX from Synechocystis sp. (strain ATCC 27184 / PCC 6803 / Kazusa).